Reading from the N-terminus, the 333-residue chain is Holliday junction branch migration complex subunit RuvB (333 aa).

The large ATPase domain (RuvB-L) stretch occupies residues 1–182 (MEERMVSAEA…FGVMARLEYY (182 aa)). Residues I21, R22, G63, K66, T67, T68, 129–131 (EDY), R172, Y182, and R219 contribute to the ATP site. Residue T67 participates in Mg(2+) binding. A small ATPAse domain (RuvB-S) region spans residues 183–253 (NVEELTTIIE…RAIESLERLQ (71 aa)). The segment at 256–333 (RLGLDHIDHK…EHFNMEVPNK (78 aa)) is head domain (RuvB-H). The DNA site is built by R311 and R316.

This sequence belongs to the RuvB family. Homohexamer. Forms an RuvA(8)-RuvB(12)-Holliday junction (HJ) complex. HJ DNA is sandwiched between 2 RuvA tetramers; dsDNA enters through RuvA and exits via RuvB. An RuvB hexamer assembles on each DNA strand where it exits the tetramer. Each RuvB hexamer is contacted by two RuvA subunits (via domain III) on 2 adjacent RuvB subunits; this complex drives branch migration. In the full resolvosome a probable DNA-RuvA(4)-RuvB(12)-RuvC(2) complex forms which resolves the HJ.

The protein localises to the cytoplasm. It catalyses the reaction ATP + H2O = ADP + phosphate + H(+). The RuvA-RuvB-RuvC complex processes Holliday junction (HJ) DNA during genetic recombination and DNA repair, while the RuvA-RuvB complex plays an important role in the rescue of blocked DNA replication forks via replication fork reversal (RFR). RuvA specifically binds to HJ cruciform DNA, conferring on it an open structure. The RuvB hexamer acts as an ATP-dependent pump, pulling dsDNA into and through the RuvAB complex. RuvB forms 2 homohexamers on either side of HJ DNA bound by 1 or 2 RuvA tetramers; 4 subunits per hexamer contact DNA at a time. Coordinated motions by a converter formed by DNA-disengaged RuvB subunits stimulates ATP hydrolysis and nucleotide exchange. Immobilization of the converter enables RuvB to convert the ATP-contained energy into a lever motion, pulling 2 nucleotides of DNA out of the RuvA tetramer per ATP hydrolyzed, thus driving DNA branch migration. The RuvB motors rotate together with the DNA substrate, which together with the progressing nucleotide cycle form the mechanistic basis for DNA recombination by continuous HJ branch migration. Branch migration allows RuvC to scan DNA until it finds its consensus sequence, where it cleaves and resolves cruciform DNA. The polypeptide is Holliday junction branch migration complex subunit RuvB (Halalkalibacterium halodurans (strain ATCC BAA-125 / DSM 18197 / FERM 7344 / JCM 9153 / C-125) (Bacillus halodurans)).